The primary structure comprises 130 residues: Small ribosomal subunit protein uS9 (130 aa).

The protein belongs to the universal ribosomal protein uS9 family.

This Vibrio atlanticus (strain LGP32) (Vibrio splendidus (strain Mel32)) protein is Small ribosomal subunit protein uS9.